The primary structure comprises 101 residues: Small ubiquitin-related modifier 1 (101 aa).

The 78-residue stretch at 20 to 97 (EYIKLKVIGQ…IEVYQEQTGG (78 aa)) folds into the Ubiquitin-like domain. Residue glycine 97 forms a Glycyl lysine isopeptide (Gly-Lys) (interchain with K-? in acceptor proteins) linkage. Residues 98 to 101 (HSTV) constitute a propeptide that is removed on maturation.

Belongs to the ubiquitin family. SUMO subfamily. As to quaternary structure, interacts with SAE2, UBE2I, RANBP2, PIAS1 and PIAS2. Covalently attached to a number of proteins. Cleavage of precursor form by a sentrin-specific protease is necessary for function.

The protein localises to the nucleus membrane. It is found in the nucleus speckle. It localises to the cytoplasm. The protein resides in the nucleus. Its subcellular location is the PML body. The protein localises to the cell membrane. In terms of biological role, ubiquitin-like protein that can be covalently attached to proteins as a monomer or a lysine-linked polymer. Covalent attachment via an isopeptide bond to its substrates requires prior activation by the E1 complex SAE1-SAE2 and linkage to the E2 enzyme UBE2I. This post-translational modification on lysine residues of proteins plays a crucial role in a number of cellular processes such as nuclear transport, DNA replication and repair, mitosis and signal transduction. Polymeric SUMO1 chains are also susceptible to polyubiquitination which functions as a signal for proteasomal degradation of modified proteins. This chain is Small ubiquitin-related modifier 1 (SUMO1), found in Gallus gallus (Chicken).